Reading from the N-terminus, the 353-residue chain is Photosystem II protein D1 (353 aa).

Position 2 is an N-acetylthreonine (Thr-2). Thr-2 carries the phosphothreonine modification. The next 3 helical transmembrane spans lie at 29 to 46 (YIGWFGVLMIPCLLTATS), 118 to 133 (HFFIGICCYMGREWEL), and 142 to 156 (WIAVAYSAPVAAATA). His-118 is a chlorophyll a binding site. Tyr-126 contacts pheophytin a. [CaMn4O5] cluster-binding residues include Asp-170 and Glu-189. The chain crosses the membrane as a helical span at residues 197–218 (FHMLGVAGVFGGSLFSAMHGSL). Position 198 (His-198) interacts with chlorophyll a. Residues His-215 and 264–265 (SF) each bind a quinone. Residue His-215 participates in Fe cation binding. Residue His-272 participates in Fe cation binding. The chain crosses the membrane as a helical span at residues 274-288 (FLAIWPVVGIWFTAL). Positions 332, 333, 342, and 344 each coordinate [CaMn4O5] cluster. Residues 345 to 353 (SVEAPSING) constitute a propeptide that is removed on maturation.

It belongs to the reaction center PufL/M/PsbA/D family. In terms of assembly, PSII is composed of 1 copy each of membrane proteins PsbA, PsbB, PsbC, PsbD, PsbE, PsbF, PsbH, PsbI, PsbJ, PsbK, PsbL, PsbM, PsbT, PsbX, PsbY, PsbZ, Psb30/Ycf12, at least 3 peripheral proteins of the oxygen-evolving complex and a large number of cofactors. It forms dimeric complexes. The cofactor is The D1/D2 heterodimer binds P680, chlorophylls that are the primary electron donor of PSII, and subsequent electron acceptors. It shares a non-heme iron and each subunit binds pheophytin, quinone, additional chlorophylls, carotenoids and lipids. D1 provides most of the ligands for the Mn4-Ca-O5 cluster of the oxygen-evolving complex (OEC). There is also a Cl(-1) ion associated with D1 and D2, which is required for oxygen evolution. The PSII complex binds additional chlorophylls, carotenoids and specific lipids.. Post-translationally, tyr-161 forms a radical intermediate that is referred to as redox-active TyrZ, YZ or Y-Z. C-terminally processed by CTPA; processing is essential to allow assembly of the oxygen-evolving complex and thus photosynthetic growth.

The protein localises to the plastid. Its subcellular location is the chloroplast thylakoid membrane. It catalyses the reaction 2 a plastoquinone + 4 hnu + 2 H2O = 2 a plastoquinol + O2. Photosystem II (PSII) is a light-driven water:plastoquinone oxidoreductase that uses light energy to abstract electrons from H(2)O, generating O(2) and a proton gradient subsequently used for ATP formation. It consists of a core antenna complex that captures photons, and an electron transfer chain that converts photonic excitation into a charge separation. The D1/D2 (PsbA/PsbD) reaction center heterodimer binds P680, the primary electron donor of PSII as well as several subsequent electron acceptors. The chain is Photosystem II protein D1 from Stigeoclonium helveticum (Green alga).